A 191-amino-acid chain; its full sequence is Ribonuclease MC (191 aa).

Residue Q9 coordinates RNA. A disulfide bridge connects residues C15 and C23. Residues H34, 72 to 73 (NV), R75, F81, 84 to 85 (HE), and 88 to 89 (KH) contribute to the RNA site. H34 functions as the Proton donor in the catalytic mechanism. Cystine bridges form between C48–C92, C152–C185, and C169–C180. E85 is a catalytic residue. The Proton acceptor role is filled by H89.

The protein belongs to the RNase T2 family.

The catalysed reaction is a ribonucleotidyl-ribonucleotide-RNA + H2O = a 3'-end 3'-phospho-ribonucleotide-RNA + a 5'-end dephospho-ribonucleoside-RNA + H(+). Its function is as follows. Ribonuclease cleaving preferentially the 5'-side of uridine. The sequence is that of Ribonuclease MC from Momordica charantia (Bitter gourd).